Consider the following 329-residue polypeptide: Stimulator of interferon genes protein (329 aa).

Residues Met-1–Val-4 are Cytoplasmic-facing. Residues Leu-5–Gln-25 traverse the membrane as a helical segment. Leu-26 is a topological domain (lumenal). Residues Ile-27 to Glu-52 form a helical membrane-spanning segment. Residues Ile-53–Leu-74 lie on the Cytoplasmic side of the membrane. The chain crosses the membrane as a helical span at residues Ser-75–Phe-88. Topologically, residues Tyr-89–Pro-98 are lumenal. The chain crosses the membrane as a helical span at residues Leu-99–Leu-116. Over Gly-117 to Leu-329 the chain is Cytoplasmic. A cyclic dinucleotide-binding domain (CBD) region spans residues Leu-135–Glu-325. Ser-144, Tyr-149, Arg-220, and Thr-245 together coordinate 2',3'-cGAMP. 3',3'-c-di-GMP-binding positions include Ser-144, Tyr-149, Arg-220–Lys-223, and Thr-245.

This sequence belongs to the STING family. As to quaternary structure, homodimer; forms a homodimer in absence of cyclic nucleotide (c-di-GMP or cGAMP). Homotetramer; in presence of cyclic nucleotide (c-di-GMP or cGAMP), forms tetramers and higher-order oligomers through side-by-side packing.

Its subcellular location is the endoplasmic reticulum membrane. It is found in the cytoplasm. The protein localises to the perinuclear region. The protein resides in the endoplasmic reticulum-Golgi intermediate compartment membrane. It localises to the golgi apparatus membrane. Its subcellular location is the cytoplasmic vesicle. It is found in the autophagosome membrane. The enzyme catalyses H(+)(in) = H(+)(out). In terms of biological role, sensor of cytosolic DNA from bacteria and viruses that promotes autophagy. Acts by recognizing and binding cyclic GMP-AMP (cGAMP), a messenger produced by CGAS in response to DNA in the cytosol. Exhibits guanine base-specific ligand recognition: binds 3'-3'linked cGAMP, 2'-3' linked cGAMP and 3'-3' linked c-di-GMP with much greater affinity as compared to 3'-3' linked c-di-AMP. Following cGAMP-binding, promotes the formation of autophagosomes, leading to target cytosolic DNA for degradation by the lysosome. Promotes autophagy by acting as a proton channel that directs proton efflux from the Golgi to facilitate LC3 lipidation. Lacks the C-terminal tail (CTT) found in other vertebrate orthologs which is essential for interferon signaling. The polypeptide is Stimulator of interferon genes protein (Xenopus tropicalis (Western clawed frog)).